The primary structure comprises 254 residues: Phosphoribosylaminoimidazole-succinocarboxamide synthase (254 aa).

It belongs to the SAICAR synthetase family.

It carries out the reaction 5-amino-1-(5-phospho-D-ribosyl)imidazole-4-carboxylate + L-aspartate + ATP = (2S)-2-[5-amino-1-(5-phospho-beta-D-ribosyl)imidazole-4-carboxamido]succinate + ADP + phosphate + 2 H(+). Its pathway is purine metabolism; IMP biosynthesis via de novo pathway; 5-amino-1-(5-phospho-D-ribosyl)imidazole-4-carboxamide from 5-amino-1-(5-phospho-D-ribosyl)imidazole-4-carboxylate: step 1/2. The sequence is that of Phosphoribosylaminoimidazole-succinocarboxamide synthase from Brucella canis (strain ATCC 23365 / NCTC 10854 / RM-666).